Reading from the N-terminus, the 367-residue chain is Quinolinate synthase (367 aa).

Iminosuccinate contacts are provided by His-46 and Ser-63. A [4Fe-4S] cluster-binding site is contributed by Cys-110. Iminosuccinate is bound by residues 141–143 (YVN) and Ser-162. Cys-229 contributes to the [4Fe-4S] cluster binding site. Residues 255 to 257 (HPE) and Thr-272 contribute to the iminosuccinate site. Cys-319 provides a ligand contact to [4Fe-4S] cluster.

The protein belongs to the quinolinate synthase family. Type 3 subfamily. It depends on [4Fe-4S] cluster as a cofactor.

Its subcellular location is the cytoplasm. The enzyme catalyses iminosuccinate + dihydroxyacetone phosphate = quinolinate + phosphate + 2 H2O + H(+). It participates in cofactor biosynthesis; NAD(+) biosynthesis; quinolinate from iminoaspartate: step 1/1. Functionally, catalyzes the condensation of iminoaspartate with dihydroxyacetone phosphate to form quinolinate. This Bacillus velezensis (strain DSM 23117 / BGSC 10A6 / LMG 26770 / FZB42) (Bacillus amyloliquefaciens subsp. plantarum) protein is Quinolinate synthase.